A 245-amino-acid chain; its full sequence is MPRYKLIIEYDGAPYCGWQIQDNGPSVQGALETAVKAICGKFVRVNGAGRTDAGVHALAQVAHCDIAKEFAPGRLRDGLNAHLRPHPIGVLSAEIVPDDFEARFSAIKRHYVYRISNRRANLALQIGKVWRLPRRLDTDAMHAAAQRLVGKHDFTTFRDTECQAKSPDKTLDQLDVIRDGDNVSIITSARSFLHSQVRSMVGSLVWVGEGRWSADDLAAALAARRRTACGPVAPPDGLYLVKVDY.

Asp52 functions as the Nucleophile in the catalytic mechanism. Tyr111 is a substrate binding site.

It belongs to the tRNA pseudouridine synthase TruA family. Homodimer.

It carries out the reaction uridine(38/39/40) in tRNA = pseudouridine(38/39/40) in tRNA. Functionally, formation of pseudouridine at positions 38, 39 and 40 in the anticodon stem and loop of transfer RNAs. This Rhodopseudomonas palustris (strain BisB18) protein is tRNA pseudouridine synthase A.